The chain runs to 186 residues: dCTP deaminase (186 aa).

Residue 107–112 (KSSYAR) participates in dCTP binding. The active-site Proton donor/acceptor is E133. 3 residues coordinate dCTP: Q152, Y166, and Q176.

This sequence belongs to the dCTP deaminase family. Homotrimer.

The enzyme catalyses dCTP + H2O + H(+) = dUTP + NH4(+). It participates in pyrimidine metabolism; dUMP biosynthesis; dUMP from dCTP (dUTP route): step 1/2. In terms of biological role, catalyzes the deamination of dCTP to dUTP. The sequence is that of dCTP deaminase from Chloroflexus aurantiacus (strain ATCC 29366 / DSM 635 / J-10-fl).